The chain runs to 501 residues: Lysine--tRNA ligase (501 aa).

2 residues coordinate Mg(2+): Glu-412 and Glu-419.

The protein belongs to the class-II aminoacyl-tRNA synthetase family. In terms of assembly, homodimer. Mg(2+) serves as cofactor.

It is found in the cytoplasm. The catalysed reaction is tRNA(Lys) + L-lysine + ATP = L-lysyl-tRNA(Lys) + AMP + diphosphate. In Chlorobium luteolum (strain DSM 273 / BCRC 81028 / 2530) (Pelodictyon luteolum), this protein is Lysine--tRNA ligase.